The primary structure comprises 162 residues: Phosphopantetheine adenylyltransferase (162 aa).

Substrate is bound at residue Ser-9. Residues 9-10 (SF) and His-17 each bind ATP. Substrate contacts are provided by Lys-41, Ile-77, and Lys-91. Residues 92–94 (GLR), Glu-102, and 126–132 (YAFLSSS) each bind ATP.

Belongs to the bacterial CoaD family. In terms of assembly, homohexamer. It depends on Mg(2+) as a cofactor.

The protein resides in the cytoplasm. It carries out the reaction (R)-4'-phosphopantetheine + ATP + H(+) = 3'-dephospho-CoA + diphosphate. It functions in the pathway cofactor biosynthesis; coenzyme A biosynthesis; CoA from (R)-pantothenate: step 4/5. Reversibly transfers an adenylyl group from ATP to 4'-phosphopantetheine, yielding dephospho-CoA (dPCoA) and pyrophosphate. The sequence is that of Phosphopantetheine adenylyltransferase from Frankia casuarinae (strain DSM 45818 / CECT 9043 / HFP020203 / CcI3).